Reading from the N-terminus, the 326-residue chain is Heterodimeric geranylgeranyl pyrophosphate synthase small subunit, chloroplastic (326 aa).

The N-terminal 33 residues, 1–33, are a transit peptide targeting the chloroplast; it reads MLFSGSAIPLSSFCSLPEKPHTLPMKLSPAAIR. Residues Lys88 and His120 each coordinate isopentenyl diphosphate. Mg(2+) contacts are provided by Asp127 and Asp133. Arg138 is a binding site for dimethylallyl diphosphate. Arg139 provides a ligand contact to isopentenyl diphosphate. Residues Lys220 and Gln258 each coordinate dimethylallyl diphosphate. The stretch at 274–301 forms a coiled coil; the sequence is GAEKGMMEMAEELKEKAKKELQVFDNKY.

It belongs to the FPP/GGPP synthase family. Part of a heterodimeric geranyl(geranyl)diphosphate synthase. Interacts with GGPPS1 or GGPPS2, but not with GGPPS9. Interacts with LIL3.1 and LIL3.2. The cofactor is Mg(2+). As to expression, expressed ubiquitously.

The protein resides in the plastid. The protein localises to the chloroplast thylakoid membrane. Its function is as follows. Heterodimeric geranyl(geranyl)-diphosphate (GPP) synthase small subunit. The small subunit alone is inactive in vitro while the large subunit GGPPS1 catalyzes mainly the production of geranygeranyl-diphosphate in vitro. Upon association of the two subunits, the product profile changes and the production of gerany-diphosphate is strongly increased. This Arabidopsis thaliana (Mouse-ear cress) protein is Heterodimeric geranylgeranyl pyrophosphate synthase small subunit, chloroplastic (GGR).